We begin with the raw amino-acid sequence, 351 residues long: Protein-glutamate methylesterase/protein-glutamine glutaminase 2 (351 aa).

Residues 4–121 (KVLVVDDSTL…PQGFNEYQDL (118 aa)) enclose the Response regulatory domain. Asp55 is modified (4-aspartylphosphate). The CheB-type methylesterase domain occupies 156 to 348 (RTVNTQLVAI…DKLLQYLASV (193 aa)). Catalysis depends on residues Ser168, His194, and Asp290.

The protein belongs to the CheB family. In terms of processing, phosphorylated by CheA. Phosphorylation of the N-terminal regulatory domain activates the methylesterase activity.

It localises to the cytoplasm. The enzyme catalyses [protein]-L-glutamate 5-O-methyl ester + H2O = L-glutamyl-[protein] + methanol + H(+). It carries out the reaction L-glutaminyl-[protein] + H2O = L-glutamyl-[protein] + NH4(+). Involved in chemotaxis. Part of a chemotaxis signal transduction system that modulates chemotaxis in response to various stimuli. Catalyzes the demethylation of specific methylglutamate residues introduced into the chemoreceptors (methyl-accepting chemotaxis proteins or MCP) by CheR. Also mediates the irreversible deamidation of specific glutamine residues to glutamic acid. The polypeptide is Protein-glutamate methylesterase/protein-glutamine glutaminase 2 (Shewanella oneidensis (strain ATCC 700550 / JCM 31522 / CIP 106686 / LMG 19005 / NCIMB 14063 / MR-1)).